Consider the following 142-residue polypeptide: Putative pre-16S rRNA nuclease (142 aa).

This sequence belongs to the YqgF nuclease family.

It localises to the cytoplasm. Functionally, could be a nuclease involved in processing of the 5'-end of pre-16S rRNA. This Prosthecochloris aestuarii (strain DSM 271 / SK 413) protein is Putative pre-16S rRNA nuclease.